Consider the following 287-residue polypeptide: ATP synthase gamma chain (287 aa).

The protein belongs to the ATPase gamma chain family. In terms of assembly, F-type ATPases have 2 components, CF(1) - the catalytic core - and CF(0) - the membrane proton channel. CF(1) has five subunits: alpha(3), beta(3), gamma(1), delta(1), epsilon(1). CF(0) has three main subunits: a, b and c.

Its subcellular location is the cell membrane. Produces ATP from ADP in the presence of a proton gradient across the membrane. The gamma chain is believed to be important in regulating ATPase activity and the flow of protons through the CF(0) complex. The protein is ATP synthase gamma chain of Mycoplasmopsis agalactiae (strain NCTC 10123 / CIP 59.7 / PG2) (Mycoplasma agalactiae).